Reading from the N-terminus, the 152-residue chain is Xanthine-guanine phosphoribosyltransferase (152 aa).

5-phospho-alpha-D-ribose 1-diphosphate-binding positions include 37-38, Arg-69, and 88-96; these read RG and DDLVDTGGT. Arg-69 contributes to the GMP binding site. A Mg(2+)-binding site is contributed by Asp-89. Guanine contacts are provided by Asp-92 and Ile-135. Positions 92 and 135 each coordinate xanthine. Residues 92 to 96 and 134 to 135 each bind GMP; these read DTGGT and WI.

This sequence belongs to the purine/pyrimidine phosphoribosyltransferase family. XGPT subfamily. Homotetramer. Mg(2+) is required as a cofactor.

The protein resides in the cell inner membrane. It carries out the reaction GMP + diphosphate = guanine + 5-phospho-alpha-D-ribose 1-diphosphate. It catalyses the reaction XMP + diphosphate = xanthine + 5-phospho-alpha-D-ribose 1-diphosphate. The catalysed reaction is IMP + diphosphate = hypoxanthine + 5-phospho-alpha-D-ribose 1-diphosphate. It participates in purine metabolism; GMP biosynthesis via salvage pathway; GMP from guanine: step 1/1. The protein operates within purine metabolism; XMP biosynthesis via salvage pathway; XMP from xanthine: step 1/1. In terms of biological role, purine salvage pathway enzyme that catalyzes the transfer of the ribosyl-5-phosphate group from 5-phospho-alpha-D-ribose 1-diphosphate (PRPP) to the N9 position of the 6-oxopurines guanine and xanthine to form the corresponding ribonucleotides GMP (guanosine 5'-monophosphate) and XMP (xanthosine 5'-monophosphate), with the release of PPi. To a lesser extent, also acts on hypoxanthine. This chain is Xanthine-guanine phosphoribosyltransferase, found in Enterobacter sp. (strain 638).